We begin with the raw amino-acid sequence, 258 residues long: Tryptophan synthase alpha chain (258 aa).

Active-site proton acceptor residues include glutamate 52 and aspartate 63.

The protein belongs to the TrpA family. As to quaternary structure, tetramer of two alpha and two beta chains.

The catalysed reaction is (1S,2R)-1-C-(indol-3-yl)glycerol 3-phosphate + L-serine = D-glyceraldehyde 3-phosphate + L-tryptophan + H2O. Its pathway is amino-acid biosynthesis; L-tryptophan biosynthesis; L-tryptophan from chorismate: step 5/5. Its function is as follows. The alpha subunit is responsible for the aldol cleavage of indoleglycerol phosphate to indole and glyceraldehyde 3-phosphate. This is Tryptophan synthase alpha chain from Streptococcus pneumoniae (strain 70585).